The chain runs to 239 residues: Pyridoxine 5'-phosphate synthase (239 aa).

Asn7 contacts 3-amino-2-oxopropyl phosphate. 9–10 contacts 1-deoxy-D-xylulose 5-phosphate; that stretch reads DH. Residue Arg18 participates in 3-amino-2-oxopropyl phosphate binding. Catalysis depends on His43, which acts as the Proton acceptor. Residues Arg45 and His50 each contribute to the 1-deoxy-D-xylulose 5-phosphate site. Glu70 acts as the Proton acceptor in catalysis. Position 100 (Thr100) interacts with 1-deoxy-D-xylulose 5-phosphate. Catalysis depends on His191, which acts as the Proton donor. Residues Gly192 and 213–214 contribute to the 3-amino-2-oxopropyl phosphate site; that span reads GH.

The protein belongs to the PNP synthase family. As to quaternary structure, homooctamer; tetramer of dimers.

It localises to the cytoplasm. The catalysed reaction is 3-amino-2-oxopropyl phosphate + 1-deoxy-D-xylulose 5-phosphate = pyridoxine 5'-phosphate + phosphate + 2 H2O + H(+). It participates in cofactor biosynthesis; pyridoxine 5'-phosphate biosynthesis; pyridoxine 5'-phosphate from D-erythrose 4-phosphate: step 5/5. Its function is as follows. Catalyzes the complicated ring closure reaction between the two acyclic compounds 1-deoxy-D-xylulose-5-phosphate (DXP) and 3-amino-2-oxopropyl phosphate (1-amino-acetone-3-phosphate or AAP) to form pyridoxine 5'-phosphate (PNP) and inorganic phosphate. The sequence is that of Pyridoxine 5'-phosphate synthase from Syntrophotalea carbinolica (strain DSM 2380 / NBRC 103641 / GraBd1) (Pelobacter carbinolicus).